A 316-amino-acid polypeptide reads, in one-letter code: tRNA dimethylallyltransferase (316 aa).

17 to 24 (GPTASGKT) is a binding site for ATP. Substrate is bound at residue 19–24 (TASGKT). 4 interaction with substrate tRNA regions span residues 42 to 45 (DSAL), 166 to 170 (QRLSR), 247 to 252 (RCVGYR), and 280 to 287 (KRQITWLR).

This sequence belongs to the IPP transferase family. In terms of assembly, monomer. Requires Mg(2+) as cofactor.

The catalysed reaction is adenosine(37) in tRNA + dimethylallyl diphosphate = N(6)-dimethylallyladenosine(37) in tRNA + diphosphate. Functionally, catalyzes the transfer of a dimethylallyl group onto the adenine at position 37 in tRNAs that read codons beginning with uridine, leading to the formation of N6-(dimethylallyl)adenosine (i(6)A). The polypeptide is tRNA dimethylallyltransferase (Escherichia fergusonii (strain ATCC 35469 / DSM 13698 / CCUG 18766 / IAM 14443 / JCM 21226 / LMG 7866 / NBRC 102419 / NCTC 12128 / CDC 0568-73)).